A 329-amino-acid polypeptide reads, in one-letter code: Beta-ketoacyl-[acyl-carrier-protein] synthase III (329 aa).

Residues Cys113 and His255 contribute to the active site. The interval 256–260 (QANQR) is ACP-binding. The active site involves Asn285.

This sequence belongs to the thiolase-like superfamily. FabH family. Homodimer.

The protein resides in the cytoplasm. The enzyme catalyses malonyl-[ACP] + acetyl-CoA + H(+) = 3-oxobutanoyl-[ACP] + CO2 + CoA. Its pathway is lipid metabolism; fatty acid biosynthesis. Functionally, catalyzes the condensation reaction of fatty acid synthesis by the addition to an acyl acceptor of two carbons from malonyl-ACP. Catalyzes the first condensation reaction which initiates fatty acid synthesis and may therefore play a role in governing the total rate of fatty acid production. Possesses both acetoacetyl-ACP synthase and acetyl transacylase activities. Its substrate specificity determines the biosynthesis of branched-chain and/or straight-chain of fatty acids. The chain is Beta-ketoacyl-[acyl-carrier-protein] synthase III from Chlorobium phaeovibrioides (strain DSM 265 / 1930) (Prosthecochloris vibrioformis (strain DSM 265)).